Here is a 119-residue protein sequence, read N- to C-terminus: Large ribosomal subunit protein uL18 (119 aa).

The protein belongs to the universal ribosomal protein uL18 family. In terms of assembly, part of the 50S ribosomal subunit; part of the 5S rRNA/L5/L18/L25 subcomplex. Contacts the 5S and 23S rRNAs.

In terms of biological role, this is one of the proteins that bind and probably mediate the attachment of the 5S RNA into the large ribosomal subunit, where it forms part of the central protuberance. The protein is Large ribosomal subunit protein uL18 of Xanthomonas oryzae pv. oryzae (strain MAFF 311018).